The following is a 231-amino-acid chain: 2,3-bisphosphoglycerate-dependent phosphoglycerate mutase (231 aa).

Substrate contacts are provided by residues 10–17, 23–24, arginine 62, 89–92, lysine 100, 116–117, and 185–186; these read RHGQSEWN, TG, ERHY, RR, and GN. Histidine 11 functions as the Tele-phosphohistidine intermediate in the catalytic mechanism. Glutamate 89 (proton donor/acceptor) is an active-site residue.

Belongs to the phosphoglycerate mutase family. BPG-dependent PGAM subfamily. As to quaternary structure, homodimer.

The catalysed reaction is (2R)-2-phosphoglycerate = (2R)-3-phosphoglycerate. Its pathway is carbohydrate degradation; glycolysis; pyruvate from D-glyceraldehyde 3-phosphate: step 3/5. Functionally, catalyzes the interconversion of 2-phosphoglycerate and 3-phosphoglycerate. This is 2,3-bisphosphoglycerate-dependent phosphoglycerate mutase from Buchnera aphidicola subsp. Acyrthosiphon pisum (strain APS) (Acyrthosiphon pisum symbiotic bacterium).